We begin with the raw amino-acid sequence, 84 residues long: uncharacterized protein (84 aa).

The stretch at 5 to 31 (KIQEIINELDNLMNRERKYIELVATVE) forms a coiled coil.

This is an uncharacterized protein from Methanocaldococcus jannaschii (strain ATCC 43067 / DSM 2661 / JAL-1 / JCM 10045 / NBRC 100440) (Methanococcus jannaschii).